A 503-amino-acid chain; its full sequence is 12-dehydrotetracycline 5-monooxygenase/anhydrotetracycline 6-monooxygenase (503 aa).

FAD-binding positions include Thr-13, 32 to 33 (ER), Leu-44, Gln-99, Val-123, Thr-160, Asp-288, and 301 to 302 (LN).

The protein belongs to the PheA/TfdB FAD monooxygenase family. Monomer. It depends on FAD as a cofactor.

The catalysed reaction is 5a,11a-dehydrotetracycline + NADPH + O2 + H(+) = 5a,11a-dehydrooxytetracycline + NADP(+) + H2O. It carries out the reaction anhydrotetracycline + NADPH + O2 + H(+) = 5a,11a-dehydrotetracycline + NADP(+) + H2O. It functions in the pathway antibiotic biosynthesis; oxytetracycline biosynthesis. In terms of biological role, involved in the biosynthesis of the antibiotics oxytetracycline and tetracycline. OxyS starts by catalyzing the stereospecific hydroxylation of anhydrotetracycline at C(6) position to yield 5a,11a-dehydrotetracycline (12-dehydrotetracycline). If the released product is captured by OxyR, it is reduced to tetracycline. However, if the released product is recaptured by OxyS, it performs an additional hydroxylation at C(5), producing 5a,11a-dehydrooxytetracycline, which, following the action of OxyR becomes oxytetracycline. The protein is 12-dehydrotetracycline 5-monooxygenase/anhydrotetracycline 6-monooxygenase of Streptomyces rimosus subsp. rimosus (strain ATCC 10970 / DSM 40260 / JCM 4667 / NRRL 2234).